Here is a 735-residue protein sequence, read N- to C-terminus: Phosphoribosylformylglycinamidine synthase subunit PurL (735 aa).

H44 is a catalytic residue. ATP is bound by residues Y47 and K86. E88 provides a ligand contact to Mg(2+). Substrate contacts are provided by residues 89-92 (SHNH) and R111. H90 functions as the Proton acceptor in the catalytic mechanism. D112 serves as a coordination point for Mg(2+). Q240 is a substrate binding site. D268 is a Mg(2+) binding site. 312–314 (ESQ) serves as a coordination point for substrate. The ATP site is built by D496 and G533. N534 contributes to the Mg(2+) binding site. S536 contacts substrate.

It belongs to the FGAMS family. In terms of assembly, monomer. Part of the FGAM synthase complex composed of 1 PurL, 1 PurQ and 2 PurS subunits.

Its subcellular location is the cytoplasm. The catalysed reaction is N(2)-formyl-N(1)-(5-phospho-beta-D-ribosyl)glycinamide + L-glutamine + ATP + H2O = 2-formamido-N(1)-(5-O-phospho-beta-D-ribosyl)acetamidine + L-glutamate + ADP + phosphate + H(+). The protein operates within purine metabolism; IMP biosynthesis via de novo pathway; 5-amino-1-(5-phospho-D-ribosyl)imidazole from N(2)-formyl-N(1)-(5-phospho-D-ribosyl)glycinamide: step 1/2. In terms of biological role, part of the phosphoribosylformylglycinamidine synthase complex involved in the purines biosynthetic pathway. Catalyzes the ATP-dependent conversion of formylglycinamide ribonucleotide (FGAR) and glutamine to yield formylglycinamidine ribonucleotide (FGAM) and glutamate. The FGAM synthase complex is composed of three subunits. PurQ produces an ammonia molecule by converting glutamine to glutamate. PurL transfers the ammonia molecule to FGAR to form FGAM in an ATP-dependent manner. PurS interacts with PurQ and PurL and is thought to assist in the transfer of the ammonia molecule from PurQ to PurL. This Nitratiruptor sp. (strain SB155-2) protein is Phosphoribosylformylglycinamidine synthase subunit PurL.